A 290-amino-acid polypeptide reads, in one-letter code: MPELPEVETVRRGLEMKIAGRVLVRVAQYRPDLRFPLPERFAARLTGLRVAGLFRRAKYLLIRLEGSAEGPLVWLVHLGMSGTLVVRRGPPGPPGPHDHLVFETDPPPGEAQGWVVTYNDVRRFGFMDLFPEALLDSHPMLACLGPEPLGNGFDAEELSRRLAGKITPIKAALLDQTVVAGLGNIYVCESLFRAGISPRRLAHTVAGRRAGRLVPAIRDVLTEAIAAGGSSLRDYVQSDGELGYFQHSFKVYGREGEPCPGCDCDPVRTGGIARIVQSGRSTFYCPRHQR.

The Schiff-base intermediate with DNA role is filled by Pro2. Glu3 acts as the Proton donor in catalysis. Catalysis depends on Lys58, which acts as the Proton donor; for beta-elimination activity. 3 residues coordinate DNA: His97, Arg122, and Lys165. The FPG-type; atypical zinc-finger motif lies at Lys250 to Arg290. Arg280 serves as the catalytic Proton donor; for delta-elimination activity.

This sequence belongs to the FPG family. In terms of assembly, monomer. Requires Zn(2+) as cofactor.

The enzyme catalyses Hydrolysis of DNA containing ring-opened 7-methylguanine residues, releasing 2,6-diamino-4-hydroxy-5-(N-methyl)formamidopyrimidine.. It catalyses the reaction 2'-deoxyribonucleotide-(2'-deoxyribose 5'-phosphate)-2'-deoxyribonucleotide-DNA = a 3'-end 2'-deoxyribonucleotide-(2,3-dehydro-2,3-deoxyribose 5'-phosphate)-DNA + a 5'-end 5'-phospho-2'-deoxyribonucleoside-DNA + H(+). Involved in base excision repair of DNA damaged by oxidation or by mutagenic agents. Acts as a DNA glycosylase that recognizes and removes damaged bases. Has a preference for oxidized purines, such as 7,8-dihydro-8-oxoguanine (8-oxoG). Has AP (apurinic/apyrimidinic) lyase activity and introduces nicks in the DNA strand. Cleaves the DNA backbone by beta-delta elimination to generate a single-strand break at the site of the removed base with both 3'- and 5'-phosphates. In Rhodospirillum centenum (strain ATCC 51521 / SW), this protein is Formamidopyrimidine-DNA glycosylase.